Here is a 46-residue protein sequence, read N- to C-terminus: Delta-actitoxin-Avd1d (46 aa).

Intrachain disulfides connect Cys4–Cys44, Cys6–Cys34, and Cys27–Cys45.

It belongs to the sea anemone sodium channel inhibitory toxin family. Type I subfamily.

Its subcellular location is the secreted. It localises to the nematocyst. Functionally, binds specifically to voltage-gated sodium channels (Nav), thereby delaying their inactivation during signal transduction. Thus it strongly stimulates mammalian cardiac muscle contraction. The sequence is that of Delta-actitoxin-Avd1d from Anemonia sulcata (Mediterranean snakelocks sea anemone).